Reading from the N-terminus, the 87-residue chain is Large ribosomal subunit protein bL27 (87 aa).

The tract at residues 1–20 is disordered; sequence MAHKKAGGSSRNGRDSESKR.

This sequence belongs to the bacterial ribosomal protein bL27 family.

This is Large ribosomal subunit protein bL27 from Thiobacillus denitrificans (strain ATCC 25259 / T1).